Consider the following 378-residue polypeptide: MKHSVHFGAGNIGRGFIGEILFKNGFHIDFVDVNNQIIHALNEKGKYEIEIAQKGQSRIEVTNVAGINSKEHPEQVIEAIQKTDIITTAIGPNILPFIAELLAKGIEARRVAGNTQALDVMACENMIGGSQFLYQEVKKYLSPEGLTFADNYIGFPNAAVDRIVPAQSHEDSLFVVVEPFNEWVVETKRLKNPDLRLEDVHYEEDLEPFIERKLFSVNSGHATSAYIGAHYGAKTILEALQNPNIKSRIESVLAEIRSLLIAKWNFDKKELENYHKVIIERFENPFIVDEVSRVARTPIRKLGYNERFIRPIRELKELSLSYKNLLKTVGYAFDYRDVNDEESIRLGELLAIQSVKDVVIQVTGLDDQELIEQIVEYI.

Serine 4–glycine 15 serves as a coordination point for NAD(+).

The protein belongs to the mannitol dehydrogenase family.

It catalyses the reaction D-mannitol 1-phosphate + NAD(+) = beta-D-fructose 6-phosphate + NADH + H(+). This is Mannitol-1-phosphate 5-dehydrogenase from Streptococcus pneumoniae (strain Hungary19A-6).